Consider the following 460-residue polypeptide: Proline--tRNA ligase (460 aa).

The protein belongs to the class-II aminoacyl-tRNA synthetase family. ProS type 3 subfamily. In terms of assembly, homodimer.

Its subcellular location is the cytoplasm. The catalysed reaction is tRNA(Pro) + L-proline + ATP = L-prolyl-tRNA(Pro) + AMP + diphosphate. In terms of biological role, catalyzes the attachment of proline to tRNA(Pro) in a two-step reaction: proline is first activated by ATP to form Pro-AMP and then transferred to the acceptor end of tRNA(Pro). In Methanococcus maripaludis (strain C7 / ATCC BAA-1331), this protein is Proline--tRNA ligase.